The sequence spans 504 residues: Arabinose import ATP-binding protein AraG (504 aa).

ABC transporter domains follow at residues 8 to 243 (LSFR…MVGR) and 256 to 499 (YGEE…MPKV). 40–47 (GENGAGKS) is a binding site for ATP.

This sequence belongs to the ABC transporter superfamily. Arabinose importer (TC 3.A.1.2.2) family. In terms of assembly, the complex is composed of two ATP-binding proteins (AraG), two transmembrane proteins (AraH) and a solute-binding protein (AraF).

The protein resides in the cell inner membrane. It carries out the reaction L-arabinose(out) + ATP + H2O = L-arabinose(in) + ADP + phosphate + H(+). Functionally, part of the ABC transporter complex AraFGH involved in arabinose import. Responsible for energy coupling to the transport system. The protein is Arabinose import ATP-binding protein AraG of Shigella sonnei (strain Ss046).